Here is a 415-residue protein sequence, read N- to C-terminus: Vascular endothelial growth factor C (415 aa).

Positions 1–31 (MHLLCFLSLACSLLAAALIPSPREAPATVAA) are cleaved as a signal peptide. Positions 32–107 (FESGLGFSEA…RTGDSVKFAA (76 aa)) are excised as a propeptide. 3 disulfide bridges follow: Cys127–Cys169, Cys158–Cys205, and Cys162–Cys207. Asn171, Asn201, and Asn236 each carry an N-linked (GlcNAc...) asparagine glycan. Residues 224 to 415 (SLPATLPQCQ…PSYWKRPHLN (192 aa)) constitute a propeptide that is removed on maturation. Tandem repeats lie at residues 276–291 (CGPN…QCVC), 300–315 (CGPH…QCVC), 324–339 (CGAN…QCVC), and 343–358 (CPRN…ACEC). The interval 276-358 (CGPNKELDED…LNPGKCACEC (83 aa)) is 4 X 16 AA repeats of C-X(10)-C-X-C-X(1,3)-C.

The protein belongs to the PDGF/VEGF growth factor family. As to quaternary structure, homodimer; non-covalent and antiparallel. Interacts with FLT4/VEGFR3; the interaction is required for FLT4/VEGFR3 homodimarization and activation. Undergoes a complex proteolytic maturation which generates a variety of processed secreted forms with increased activity toward VEGFR-3, but only the fully processed form could activate VEGFR-2. VEGF-C first form an antiparallel homodimer linked by disulfide bonds. Before secretion, a cleavage occurs between Arg-223 and Ser-224 producing a heterotetramer. The next extracellular step of the processing removes the N-terminal propeptide. Finally the mature VEGF-C is composed mostly of two VEGF homology domains (VHDs) bound by non-covalent interactions. As to expression, expressed in adult heart, brain, spleen, lung, liver, skeletal muscle, kidney, testis and intestine with higher levels in heart, brain and kidney. Isoform 4 levels are very low. Isoform 3 is mostly expressed in liver and has reduced expression level in other tissues. Isoform 2 is mostly expressed in brain and kidney, although a lower level expression in other tissues is also detectable.

The protein localises to the secreted. Functionally, growth factor active in angiogenesis, and endothelial cell growth, stimulating their proliferation and migration and also has effects on the permeability of blood vessels. May function in angiogenesis of the venous and lymphatic vascular systems during embryogenesis, and also in the maintenance of differentiated lymphatic endothelium in adults. Binds and activates KDR/VEGFR2 and FLT4/VEGFR3 receptors. This is Vascular endothelial growth factor C (Vegfc) from Mus musculus (Mouse).